The following is a 563-amino-acid chain: Beta-catenin-like protein 1 (563 aa).

Met1 carries the N-acetylmethionine modification. The segment at 1–49 (MDVGELLSYQPNRGTKRPRDDEEEEQKMRRKQTGTRERGRYREEEMTVV) is disordered. The Nuclear localization signal motif lies at 16–33 (KRPRDDEEEEQKMRRKQT). Residues 34 to 45 (GTRERGRYREEE) show a composition bias toward basic and acidic residues. HEAT repeat units lie at residues 79–129 (ESSV…VVAT) and 134–176 (YHLL…TLHE). Lys91 bears the N6-acetyllysine mark. Residues 130–140 (MPDLYHLLVEL) carry the Nuclear export signal (NES) motif. ARM repeat units lie at residues 178–228 (EEGA…MAEF), 229–273 (RPEM…LQDN), 274–323 (DENR…CLML), 325–363 (SNRE…AMIG), and 364–417 (PEGT…LLRN). Position 389 is a phosphoserine (Ser389). The stretch at 476–540 (DTEEEFYLRR…HIIKEYAENI (65 aa)) forms a coiled coil. Phosphoserine is present on Ser545.

Component of the PRP19-CDC5L splicing complex composed of a core complex comprising a homotetramer of PRPF19, CDC5L, PLRG1 and BCAS2, and at least three less stably associated proteins CTNNBL1, CWC15 and HSPA8. Interacts directly with CWC15 and CDC5L in the complex. Interacts with AICDA; the interaction is important for the antibody diversification activity of AICDA. Interacts with PRPF31 (via its NLS). Interacts (via its N-terminal NLS) with KPNA1 and KPNA2. In terms of tissue distribution, widely expressed with highest levels in skeletal muscle, placenta, heart, spleen, testis and thyroid.

It localises to the nucleus. The protein localises to the cytoplasm. Its function is as follows. Component of the PRP19-CDC5L complex that forms an integral part of the spliceosome and is required for activating pre-mRNA splicing. Participates in AID/AICDA-mediated somatic hypermutation (SHM) and class-switch recombination (CSR), 2 processes resulting in the production of high-affinity, mutated isotype-switched antibodies. The sequence is that of Beta-catenin-like protein 1 (CTNNBL1) from Homo sapiens (Human).